Here is a 103-residue protein sequence, read N- to C-terminus: Phosphoribosyl-ATP pyrophosphatase (103 aa).

It belongs to the PRA-PH family.

The protein resides in the cytoplasm. The catalysed reaction is 1-(5-phospho-beta-D-ribosyl)-ATP + H2O = 1-(5-phospho-beta-D-ribosyl)-5'-AMP + diphosphate + H(+). It participates in amino-acid biosynthesis; L-histidine biosynthesis; L-histidine from 5-phospho-alpha-D-ribose 1-diphosphate: step 2/9. The chain is Phosphoribosyl-ATP pyrophosphatase from Cereibacter sphaeroides (strain ATCC 17029 / ATH 2.4.9) (Rhodobacter sphaeroides).